The chain runs to 585 residues: Arginine--tRNA ligase (585 aa).

Positions 131–141 (ANPTGPMHVGH) match the 'HIGH' region motif.

This sequence belongs to the class-I aminoacyl-tRNA synthetase family. As to quaternary structure, monomer.

It is found in the cytoplasm. The enzyme catalyses tRNA(Arg) + L-arginine + ATP = L-arginyl-tRNA(Arg) + AMP + diphosphate. The chain is Arginine--tRNA ligase from Brucella canis (strain ATCC 23365 / NCTC 10854 / RM-666).